Reading from the N-terminus, the 118-residue chain is Telomere bouquet protein 2 (118 aa).

In terms of assembly, interacts with bqt1. The bqt1-bqt2-sad1 complex binds rap1.

The protein localises to the cytoplasm. It localises to the nucleus. The protein resides in the cytoskeleton. Its subcellular location is the microtubule organizing center. It is found in the spindle pole body. The protein localises to the chromosome. It localises to the telomere. In terms of biological role, involved in chromosome segregation. During meiotic prophase, connects telomeres to the spindle pole body by forming a bridge between the telomere protein rap1 and the spindle pole body protein sad1. The protein is Telomere bouquet protein 2 (bqt2) of Schizosaccharomyces pombe (strain 972 / ATCC 24843) (Fission yeast).